We begin with the raw amino-acid sequence, 449 residues long: Tubulin alpha-8 chain (449 aa).

Positions 1 to 4 (MREC) match the MREC motif motif. GTP-binding residues include glutamine 11, glutamate 71, serine 140, glycine 144, threonine 145, threonine 179, asparagine 206, and asparagine 228. Glutamate 71 is a binding site for Mg(2+). Glutamate 254 is a catalytic residue.

The protein belongs to the tubulin family. Dimer of alpha and beta chains. A typical microtubule is a hollow water-filled tube with an outer diameter of 25 nm and an inner diameter of 15 nM. Alpha-beta heterodimers associate head-to-tail to form protofilaments running lengthwise along the microtubule wall with the beta-tubulin subunit facing the microtubule plus end conferring a structural polarity. Microtubules usually have 13 protofilaments but different protofilament numbers can be found in some organisms and specialized cells. Mg(2+) is required as a cofactor. Some glutamate residues at the C-terminus are polyglycylated, resulting in polyglycine chains on the gamma-carboxyl group. Glycylation is mainly limited to tubulin incorporated into axonemes (cilia and flagella) whereas glutamylation is prevalent in neuronal cells, centrioles, axonemes, and the mitotic spindle. Both modifications can coexist on the same protein on adjacent residues, and lowering polyglycylation levels increases polyglutamylation, and reciprocally. Cilia and flagella glycylation is required for their stability and maintenance. Flagella glycylation controls sperm motility. Post-translationally, some glutamate residues at the C-terminus are polyglutamylated, resulting in polyglutamate chains on the gamma-carboxyl group. Polyglutamylation plays a key role in microtubule severing by spastin (SPAST). SPAST preferentially recognizes and acts on microtubules decorated with short polyglutamate tails: severing activity by SPAST increases as the number of glutamates per tubulin rises from one to eight, but decreases beyond this glutamylation threshold. Glutamylation is also involved in cilia motility. In terms of processing, the C-terminal phenylalanine residue is cleaved by MATCAP1/KIAA0895L.

Its subcellular location is the cytoplasm. The protein localises to the cytoskeleton. The enzyme catalyses GTP + H2O = GDP + phosphate + H(+). Tubulin is the major constituent of microtubules, a cylinder consisting of laterally associated linear protofilaments composed of alpha- and beta-tubulin heterodimers. Microtubules grow by the addition of GTP-tubulin dimers to the microtubule end, where a stabilizing cap forms. Below the cap, tubulin dimers are in GDP-bound state, owing to GTPase activity of alpha-tubulin. This is Tubulin alpha-8 chain (TUBA8) from Bos taurus (Bovine).